Here is a 411-residue protein sequence, read N- to C-terminus: SH3 and cysteine-rich domain-containing protein 2 (411 aa).

The interval 1-29 (MTEMSEKENEPDDAATHSPPGTVSALQET) is disordered. Over residues 19-29 (PPGTVSALQET) the composition is skewed to polar residues. S48 carries the post-translational modification Phosphoserine. The interval 64–95 (TEVLLTPPTPLPPPSPPPTASDRGLATPSPSP) is disordered. Residues 70–82 (PPTPLPPPSPPPT) are compositionally biased toward pro residues. The Phorbol-ester/DAG-type zinc-finger motif lies at 110–161 (LHSFQEHVFKRASPCELCHQLIVGNSKQGLRCKMCKVSVHLWCSEEISHQQC). 2 disordered regions span residues 174–203 (SSPL…KVDP) and 219–288 (RSSF…ATLR). Low complexity predominate over residues 219-232 (RSSFSSTSESPTRS). SH3 domains follow at residues 292 to 351 (GPMY…RVRP) and 354 to 411 (NVWR…LTEI).

In terms of assembly, interacts (via SH3 domains) with CACNA1S. Interacts (via SH3 domains) with CACNA1C. Has much lower affinity for CACNA1C than for CACNA1S.

It is found in the cytoplasm. The protein localises to the cytosol. It localises to the cell membrane. The protein resides in the sarcolemma. Functionally, plays a redundant role in promoting the expression of calcium channel CACNA1S at the cell membrane, and thereby contributes to increased channel activity. Slows down the inactivation rate of the calcium channel CACNA1C. The protein is SH3 and cysteine-rich domain-containing protein 2 (STAC2) of Homo sapiens (Human).